The primary structure comprises 575 residues: Chaperonin CPN60-1, mitochondrial (575 aa).

A mitochondrion-targeting transit peptide spans 1–32 (MHRFATGLASKARLARNGANQIASRSNWRRNY).

Belongs to the chaperonin (HSP60) family.

The protein localises to the mitochondrion. Functionally, implicated in mitochondrial protein import and macromolecular assembly. May facilitate the correct folding of imported proteins. May also prevent misfolding and promote the refolding and proper assembly of unfolded polypeptides generated under stress conditions in the mitochondrial matrix. The chain is Chaperonin CPN60-1, mitochondrial (CPN60-1) from Cucurbita maxima (Pumpkin).